The primary structure comprises 494 residues: Hepatic triacylglycerol lipase (494 aa).

The N-terminal stretch at 1–21 (MGNHLQISVSLVLCIFIQSSA) is a signal peptide. An N-linked (GlcNAc...) asparagine glycan is attached at asparagine 79. Residue serine 169 is the Nucleophile of the active site. Aspartate 195 acts as the Charge relay system in catalysis. Residues 255–278 (CHFLELYKHIAEHGLNAITQTINC) are essential for determining substrate specificity. The active-site Charge relay system is the histidine 280. Residues 353-487 (YHYQFKIQFI…HPTQEKVFVK (135 aa)) enclose the PLAT domain. N-linked (GlcNAc...) asparagine glycosylation is present at asparagine 398.

The protein belongs to the AB hydrolase superfamily. Lipase family. Homodimer.

The protein resides in the secreted. It catalyses the reaction a triacylglycerol + H2O = a diacylglycerol + a fatty acid + H(+). The catalysed reaction is a 1-acyl-sn-glycero-3-phosphocholine + H2O = sn-glycerol 3-phosphocholine + a fatty acid + H(+). The enzyme catalyses a 1,2-diacyl-sn-glycero-3-phosphocholine + H2O = a 2-acyl-sn-glycero-3-phosphocholine + a fatty acid + H(+). It carries out the reaction 1,2-di-(9Z-octadecenoyl)-sn-glycerol + H2O = 2-(9Z-octadecenoyl)-glycerol + (9Z)-octadecenoate + H(+). It catalyses the reaction 1,2,3-tri-(9Z-octadecenoyl)-glycerol + H2O = 2,3-di-(9Z)-octadecenoyl-sn-glycerol + (9Z)-octadecenoate + H(+). The catalysed reaction is 1-(9Z-octadecenoyl)-sn-glycero-3-phospho-L-serine + H2O = sn-glycero-3-phospho-L-serine + (9Z)-octadecenoate + H(+). The enzyme catalyses 1-hexadecanoyl-sn-glycero-3-phosphocholine + H2O = sn-glycerol 3-phosphocholine + hexadecanoate + H(+). It carries out the reaction 1,3-di-(9Z-octadecenoyl)-glycerol + H2O = 3-(9Z-octadecenoyl)-sn-glycerol + (9Z)-octadecenoate + H(+). It catalyses the reaction 1,2,3-tri-(9Z-octadecenoyl)-glycerol + H2O = di-(9Z)-octadecenoylglycerol + (9Z)-octadecenoate + H(+). The catalysed reaction is 1,2-di-(9Z-octadecenoyl)-sn-glycero-3-phosphocholine + H2O = (9Z-octadecenoyl)-sn-glycero-3-phosphocholine + (9Z)-octadecenoate + H(+). The enzyme catalyses 1,2,3-tributanoylglycerol + H2O = dibutanoylglycerol + butanoate + H(+). It carries out the reaction 1,2-dihexadecanoyl-sn-glycero-3-phosphocholine + H2O = hexadecanoyl-sn-glycero-3-phosphocholine + hexadecanoate + H(+). Its activity is regulated as follows. Phospholipase A1 and lysophospholipase activities are inhibited by annexin II. Functionally, catalyzes the hydrolysis of triglycerides and phospholipids present in circulating plasma lipoproteins, including chylomicrons, intermediate density lipoproteins (IDL), low density lipoproteins (LDL) of large size and high density lipoproteins (HDL), releasing free fatty acids (FFA) and smaller lipoprotein particles. Also exhibits lysophospholipase activity. Can hydrolyze both neutral lipid and phospholipid substrates but shows a greater binding affinity for neutral lipid substrates than phospholipid substrates. In native LDL, preferentially hydrolyzes the phosphatidylcholine species containing polyunsaturated fatty acids at sn-2 position. In Rattus norvegicus (Rat), this protein is Hepatic triacylglycerol lipase (Lipc).